The following is a 570-amino-acid chain: Urease subunit alpha (570 aa).

The region spanning 135-570 is the Urease domain; it reads GGLDIHIHFN…ELPLAKRYSL (436 aa). 3 residues coordinate Ni(2+): His140, His142, and Lys219. Lys219 carries the N6-carboxylysine modification. Residue His221 coordinates substrate. The Ni(2+) site is built by His248 and His274. His322 serves as the catalytic Proton donor. Position 362 (Asp362) interacts with Ni(2+).

It belongs to the metallo-dependent hydrolases superfamily. Urease alpha subunit family. As to quaternary structure, heterotrimer of UreA (gamma), UreB (beta) and UreC (alpha) subunits. Three heterotrimers associate to form the active enzyme. It depends on Ni cation as a cofactor. Post-translationally, carboxylation allows a single lysine to coordinate two nickel ions.

It is found in the cytoplasm. It carries out the reaction urea + 2 H2O + H(+) = hydrogencarbonate + 2 NH4(+). Its pathway is nitrogen metabolism; urea degradation; CO(2) and NH(3) from urea (urease route): step 1/1. The polypeptide is Urease subunit alpha (Haloquadratum walsbyi (strain DSM 16790 / HBSQ001)).